The sequence spans 258 residues: Kallikrein-1 (258 aa).

Positions 1-18 (MWFLVLCLALSLGGTGAA) are cleaved as a signal peptide. A propeptide spans 19–24 (PPIQSR) (activation peptide). In terms of domain architecture, Peptidase S1 spans 25–255 (IVGGWECSQP…YVKWIEDTIA (231 aa)). 5 disulfides stabilise this stretch: Cys-31–Cys-170, Cys-47–Cys-63, Cys-149–Cys-216, Cys-181–Cys-195, and Cys-206–Cys-231. His-62 (charge relay system) is an active-site residue. The O-linked (GalNAc...) serine glycan is linked to Ser-90. A glycan (N-linked (GlcNAc...) asparagine) is linked at Asn-99. A glycan (O-linked (GalNAc...) serine) is linked at Ser-101. Asn-105 is a glycosylation site (N-linked (GlcNAc...) asparagine). Asp-117 (charge relay system) is an active-site residue. Asn-161 carries an N-linked (GlcNAc...) asparagine glycan. The O-linked (GalNAc...) serine glycan is linked to Ser-163. The active-site Charge relay system is Ser-210.

Belongs to the peptidase S1 family. Kallikrein subfamily.

The catalysed reaction is Preferential cleavage of Arg-|-Xaa bonds in small molecule substrates. Highly selective action to release kallidin (lysyl-bradykinin) from kininogen involves hydrolysis of Met-|-Xaa or Leu-|-Xaa.. In terms of biological role, glandular kallikreins cleave Met-Lys and Arg-Ser bonds in kininogen to release Lys-bradykinin. This is Kallikrein-1 (KLK1) from Papio hamadryas (Hamadryas baboon).